The chain runs to 391 residues: MGLEHLEEFSYPKEHGEEVEYDSEQGVRKIYVKSIKETFNFDNVSEEEKQEGGDYYLGKKEDELDEVVLRPNPHRFVLFPIKYHEIWQFYKKAEASFWTAEEIDLSKDLVDWDNKLNADERYFISTVLAYFAASDGIVNENLLERFSSEVQIPEARCVYGFQIMIENIHSETYSLLLDTYIREPKEKQRHFDAILTMGSIKAKAKWALRWINDEDSTYAIRLVAFAAVEGIFFSGSFASIFWLKKRGLMPGLTFSNELICRDEGLHTDFACLMFSHLKHRPGRKVVEAIIVEAVDIEKEYFTDALPVSLLGMNKDLMCQYIEFVADRLLVALGNDKYYNVTNPFDFMENISLAGKTNFFEKKVSDYQIAGVMSGTKRAEKDDHTFTIDEDF.

3 residues coordinate Fe cation: Asp135, Glu166, and His169. Tyr173 is a catalytic residue. Residues Glu229, Glu263, and His266 each contribute to the Fe cation site.

It belongs to the ribonucleoside diphosphate reductase small chain family. In terms of assembly, heterodimer of a large and a small subunit. Fe cation serves as cofactor.

It is found in the nucleus. The protein resides in the cytoplasm. It catalyses the reaction a 2'-deoxyribonucleoside 5'-diphosphate + [thioredoxin]-disulfide + H2O = a ribonucleoside 5'-diphosphate + [thioredoxin]-dithiol. Provides the precursors necessary for DNA synthesis. Catalyzes the biosynthesis of deoxyribonucleotides from the corresponding ribonucleotides. The polypeptide is Ribonucleoside-diphosphate reductase small chain (suc22) (Schizosaccharomyces pombe (strain 972 / ATCC 24843) (Fission yeast)).